A 380-amino-acid polypeptide reads, in one-letter code: Cytochrome b (380 aa).

The next 4 membrane-spanning stretches (helical) occupy residues 33–53, 77–98, 113–133, and 178–198; these read FGSLLGLCLITQLLTGLFLAM, WLIRNMHANGASFFFICLYMHI, WNIGVVLFLLVMMTSFVGYVL, and FFAFHFLFPFVVAAFTMLHLL. Heme b-binding residues include histidine 83 and histidine 97. Positions 182 and 196 each coordinate heme b. Histidine 201 serves as a coordination point for a ubiquinone. 4 helical membrane-spanning segments follow: residues 226–246, 288–308, 320–340, and 347–367; these read YKDLLGFAVMLLGLTALALFA, LGGVLALLFSILVLMVVPFLH, LTQMLFWVLVADMLVLTWIGG, and FIIIGQVASVLYFSLFLVLFP.

This sequence belongs to the cytochrome b family. The cytochrome bc1 complex contains 3 respiratory subunits (MT-CYB, CYC1 and UQCRFS1), 2 core proteins (UQCRC1 and UQCRC2) and probably 6 low-molecular weight proteins. Heme b serves as cofactor.

Its subcellular location is the mitochondrion inner membrane. Component of the ubiquinol-cytochrome c reductase complex (complex III or cytochrome b-c1 complex) that is part of the mitochondrial respiratory chain. The b-c1 complex mediates electron transfer from ubiquinol to cytochrome c. Contributes to the generation of a proton gradient across the mitochondrial membrane that is then used for ATP synthesis. In Gadus morhua (Atlantic cod), this protein is Cytochrome b (mt-cyb).